The primary structure comprises 865 residues: Armadillo repeat-containing protein 2 (865 aa).

2 disordered regions span residues 39-75 (TVRT…FSVH) and 214-243 (SVPF…DQSR). The segment covering 60–75 (SSRTPENRPPSSFSVH) has biased composition (polar residues). ARM repeat units follow at residues 261–300 (IEVD…HALE), 303–343 (NMLG…ALKV), 362–402 (EKND…TIKF), 407–448 (PEFL…HLLV), 461–502 (PLAR…KLTS), 505–546 (DCCV…NLTA), 550–587 (QARE…GEGD), 589–614 (RPEA…NLAI), 617–660 (GVGP…NLSY), 662–703 (KVKN…NLSQ), 705–744 (HDIC…NLTV), and 746–788 (RDKR…NFSE).

Its function is as follows. Required for sperm flagellum axoneme organization and function. Involved in axonemal central pair complex assembly and/or stability. In Bos taurus (Bovine), this protein is Armadillo repeat-containing protein 2.